Reading from the N-terminus, the 94-residue chain is Translation initiation factor IF-1 (94 aa).

In terms of domain architecture, S1-like spans 1 to 72 (MAKEELIQFE…EKGRLIFRHK (72 aa)). The tract at residues 71–94 (HKDERPGGTGAPRGAPPRGQFRRR) is disordered. Low complexity predominate over residues 82–94 (PRGAPPRGQFRRR).

The protein belongs to the IF-1 family. Component of the 30S ribosomal translation pre-initiation complex which assembles on the 30S ribosome in the order IF-2 and IF-3, IF-1 and N-formylmethionyl-tRNA(fMet); mRNA recruitment can occur at any time during PIC assembly.

It is found in the cytoplasm. In terms of biological role, one of the essential components for the initiation of protein synthesis. Stabilizes the binding of IF-2 and IF-3 on the 30S subunit to which N-formylmethionyl-tRNA(fMet) subsequently binds. Helps modulate mRNA selection, yielding the 30S pre-initiation complex (PIC). Upon addition of the 50S ribosomal subunit IF-1, IF-2 and IF-3 are released leaving the mature 70S translation initiation complex. The polypeptide is Translation initiation factor IF-1 (Rhodopseudomonas palustris (strain BisB5)).